The chain runs to 631 residues: DNA ligase (631 aa).

NAD(+) contacts are provided by residues 37–41 and 79–80; these read DAHYD and ST. Lys115 (N6-AMP-lysine intermediate) is an active-site residue. NAD(+) is bound by residues Arg131, Glu160, and Lys272. Zn(2+) contacts are provided by Cys361, Cys364, Cys377, and Cys382. The BRCT domain maps to 539-630; sequence DVSSPISGKG…SQSSPEQMSL (92 aa).

Belongs to the NAD-dependent DNA ligase family. LigA subfamily. Mg(2+) is required as a cofactor. The cofactor is Mn(2+).

The catalysed reaction is NAD(+) + (deoxyribonucleotide)n-3'-hydroxyl + 5'-phospho-(deoxyribonucleotide)m = (deoxyribonucleotide)n+m + AMP + beta-nicotinamide D-nucleotide.. In terms of biological role, DNA ligase that catalyzes the formation of phosphodiester linkages between 5'-phosphoryl and 3'-hydroxyl groups in double-stranded DNA using NAD as a coenzyme and as the energy source for the reaction. It is essential for DNA replication and repair of damaged DNA. This Desulfatibacillum aliphaticivorans protein is DNA ligase.